The chain runs to 178 residues: Large ribosomal subunit protein uL6 (178 aa).

It belongs to the universal ribosomal protein uL6 family. As to quaternary structure, part of the 50S ribosomal subunit.

Functionally, this protein binds to the 23S rRNA, and is important in its secondary structure. It is located near the subunit interface in the base of the L7/L12 stalk, and near the tRNA binding site of the peptidyltransferase center. The polypeptide is Large ribosomal subunit protein uL6 (Nautilia profundicola (strain ATCC BAA-1463 / DSM 18972 / AmH)).